A 420-amino-acid polypeptide reads, in one-letter code: Glutamyl-tRNA reductase (420 aa).

Residues 49–52 (TCNR), Ser107, 112–114 (EPQ), and Gln118 each bind substrate. Cys50 serves as the catalytic Nucleophile. 187 to 192 (GAGETI) serves as a coordination point for NADP(+).

This sequence belongs to the glutamyl-tRNA reductase family. In terms of assembly, homodimer.

The catalysed reaction is (S)-4-amino-5-oxopentanoate + tRNA(Glu) + NADP(+) = L-glutamyl-tRNA(Glu) + NADPH + H(+). The protein operates within porphyrin-containing compound metabolism; protoporphyrin-IX biosynthesis; 5-aminolevulinate from L-glutamyl-tRNA(Glu): step 1/2. In terms of biological role, catalyzes the NADPH-dependent reduction of glutamyl-tRNA(Glu) to glutamate 1-semialdehyde (GSA). The sequence is that of Glutamyl-tRNA reductase from Photobacterium profundum (strain SS9).